A 304-amino-acid chain; its full sequence is Iron(III) enterobactin esterase (304 aa).

An N-terminal signal peptide occupies residues 1 to 25; sequence MRTSLLVAALGLALAAALPGGAPLA. Catalysis depends on charge relay system residues Ser182, Glu242, and His283.

Belongs to the esterase D family. In terms of assembly, monomer.

The protein resides in the periplasm. The enzyme catalyses Fe(III)-enterobactin + 3 H2O + H(+) = Fe(III)-[N-(2,3-dihydroxybenzoyl)-L-serine] + 2 N-(2,3-dihydroxybenzoyl)-L-serine. The catalysed reaction is Fe(III)-enterobactin + H2O = Fe(III)-[N-(2,3-dihydroxybenzoyl)-L-serine]3 + H(+). It carries out the reaction Fe(III)-[N-(2,3-dihydroxybenzoyl)-L-serine]3 + H2O + H(+) = Fe(III)-[N-(2,3-dihydroxybenzoyl)-L-serine]2 + N-(2,3-dihydroxybenzoyl)-L-serine. It catalyses the reaction Fe(III)-[N-(2,3-dihydroxybenzoyl)-L-serine]2 + H2O + H(+) = Fe(III)-[N-(2,3-dihydroxybenzoyl)-L-serine] + N-(2,3-dihydroxybenzoyl)-L-serine. Catalyzes the hydrolysis of ferric enterobactin (Fe-Ent). Hydrolyzes Fe-Ent into three molecules of 2,3-dihydroxybenzoylserine (DHBS) still complexed with ferric iron. Iron reduction is necessary to obtain complete release of the metal from DHBS. It can hydrolyze salmochelin S4 (diglucosyl-C-Ent) but is not involved in iron acquisition by this siderophore. The polypeptide is Iron(III) enterobactin esterase (Pseudomonas aeruginosa (strain ATCC 15692 / DSM 22644 / CIP 104116 / JCM 14847 / LMG 12228 / 1C / PRS 101 / PAO1)).